The primary structure comprises 379 residues: Sulfate adenylyltransferase (379 aa).

Belongs to the sulfate adenylyltransferase family.

It carries out the reaction sulfate + ATP + H(+) = adenosine 5'-phosphosulfate + diphosphate. Its pathway is sulfur metabolism; hydrogen sulfide biosynthesis; sulfite from sulfate: step 1/3. This is Sulfate adenylyltransferase from Cenarchaeum symbiosum (strain A).